The chain runs to 357 residues: Protein-L-isoaspartate O-methyltransferase domain-containing protein 1 (357 aa).

Glycine 2 carries the N-myristoyl glycine lipid modification. Residue serine 64 is part of the active site. 3 adoMet binding motif regions span residues 85-94 (LNLGSGTGYL), 160-164 (YDRIY), and 181-191 (LKVGGILVMPI). Positions 240–250 (VRNLQDLARIY) are BC-box. Positions 299-333 (PLDSEEDEKMEEDNKEEEEKDHNEAMKPEEPPQNL) are disordered. Positions 301–317 (DSEEDEKMEEDNKEEEE) are enriched in acidic residues. Basic and acidic residues predominate over residues 318–333 (KDHNEAMKPEEPPQNL). The tract at residues 341–344 (LPLP) is CUL-box.

Belongs to the methyltransferase superfamily. L-isoaspartyl/D-aspartyl protein methyltransferase family. Component of the probable ECS(PCMTD1) E3 ubiquitin-protein ligase complex, at least composed of CUL5, ELOB, ELOC, RBX2 and PCMTD1. Interacts (via the BC-box) with ELOB and ELOC; the interaction is direct and stabilizes PCMTD1.

The protein localises to the cytoplasm. It localises to the membrane. Its function is as follows. Substrate recognition component of an ECS (Elongin BC-CUL5-SOCS-box protein) E3 ubiquitin ligase complex which mediates the ubiquitination and subsequent proteasomal degradation of target proteins. Specifically binds to the methyltransferase cofactor S-adenosylmethionine (AdoMet) via the N-terminal AdoMet binding motif, but does not display methyltransferase activity. May provide an alternate maintenance pathway for modified proteins by acting as a damage-specific E3 ubiquitin ligase adaptor protein. This Homo sapiens (Human) protein is Protein-L-isoaspartate O-methyltransferase domain-containing protein 1.